A 25-amino-acid polypeptide reads, in one-letter code: Caerin-2.2 (25 aa).

The protein belongs to the frog skin active peptide (FSAP) family. Caerin subfamily. Expressed by the skin parotoid and/or rostral glands.

It localises to the secreted. Antimicrobial peptide, that adopts an alpha helical conformation which can disrupt bacterial membranes. Each caerin displays a different antimicrobial specificity. The sequence is that of Caerin-2.2 from Ranoidea caerulea (Green tree frog).